A 467-amino-acid chain; its full sequence is Chromosomal replication initiator protein DnaA (467 aa).

A domain I, interacts with DnaA modulators region spans residues 1 to 85 (MTTTLWPQVL…LEVGEYAIES (85 aa)). The segment at 85–130 (SFNEPENTSVPQPLRETKAEREAAEKAASSTSKKKSDSPPKKTIKH) is domain II. Residues 87-129 (NEPENTSVPQPLRETKAEREAAEKAASSTSKKKSDSPPKKTIK) form a disordered region. Positions 99 to 109 (RETKAEREAAE) are enriched in basic and acidic residues. The domain III, AAA+ region stretch occupies residues 131-347 (NLNTNFTFDT…GALKRVGAFA (217 aa)). ATP contacts are provided by Gly175, Gly177, Lys178, and Thr179. A domain IV, binds dsDNA region spans residues 348-467 (QFTQQLVTVD…FNSLIRIITN (120 aa)).

Belongs to the DnaA family. Oligomerizes as a right-handed, spiral filament on DNA at oriC.

The protein localises to the cytoplasm. Functionally, plays an essential role in the initiation and regulation of chromosomal replication. ATP-DnaA binds to the origin of replication (oriC) to initiate formation of the DNA replication initiation complex once per cell cycle. Binds the DnaA box (a 9 base pair repeat at the origin) and separates the double-stranded (ds)DNA. Forms a right-handed helical filament on oriC DNA; dsDNA binds to the exterior of the filament while single-stranded (ss)DNA is stabiized in the filament's interior. The ATP-DnaA-oriC complex binds and stabilizes one strand of the AT-rich DNA unwinding element (DUE), permitting loading of DNA polymerase. After initiation quickly degrades to an ADP-DnaA complex that is not apt for DNA replication. Binds acidic phospholipids. The protein is Chromosomal replication initiator protein DnaA of Hydrogenovibrio crunogenus (strain DSM 25203 / XCL-2) (Thiomicrospira crunogena).